The primary structure comprises 207 residues: Large ribosomal subunit protein uL4 (207 aa).

The disordered stretch occupies residues 55-75; sequence SAVRGGGRKPWRQKGTGRARQ. Residues 60–71 show a composition bias toward basic residues; that stretch reads GGRKPWRQKGTG.

The protein belongs to the universal ribosomal protein uL4 family. Part of the 50S ribosomal subunit.

In terms of biological role, one of the primary rRNA binding proteins, this protein initially binds near the 5'-end of the 23S rRNA. It is important during the early stages of 50S assembly. It makes multiple contacts with different domains of the 23S rRNA in the assembled 50S subunit and ribosome. Functionally, forms part of the polypeptide exit tunnel. This is Large ribosomal subunit protein uL4 from Staphylococcus epidermidis (strain ATCC 35984 / DSM 28319 / BCRC 17069 / CCUG 31568 / BM 3577 / RP62A).